A 280-amino-acid polypeptide reads, in one-letter code: MSDRDQIEPVTNALDAESDSSDDFGNFSDASVENDLYNQNSTLTTSSESVVDNCLNKILPKGEFDLEEETIKNDCFKLSKLIEDERPHVIYEQLVQLDPVLQPFIWNKSHIRRNLLHILRLSDNNGSEGVGTKREEEPLNDELFKRICDAVEKNEQTATGLFLRDNFKIDYTPPMTLKSLQKEEEREQEQHIPQLLMADFTSMDEESLRQYHDTLCQSIDFLVSKSRSLKKQQRDLLKDKTTFENVVTNLTGHTQRLQRDEIALYNKKRNKKKRFSWVGY.

Residues 1 to 26 are disordered; that stretch reads MSDRDQIEPVTNALDAESDSSDDFGN. An Ear-binding motif motif is present at residues 19–30; that stretch reads DSSDDFGNFSDA.

Interacts with the clathrin-associated adapter complex AP-1. Interacts with LAA1.

It localises to the cytoplasmic vesicle. Its subcellular location is the clathrin-coated vesicle. Functionally, involved in localization of clathrin-associated adapter complex (AP-1) and subsequent AP-1-mediated clathrin-coated vesicle cargo loading. Directly mediates the interaction between LAA1 and AP-1 which is required for AP-1 localization. In complex with LAA1, cooperates with the small GTPase ARF1 and the phosphatidyl-inositol-4-phosphate (PI4P) synthesis to confer temporal specificity to AP-1 recruitment. The polypeptide is Clathrin adapter accessory protein LAA2 (Saccharomyces cerevisiae (strain ATCC 204508 / S288c) (Baker's yeast)).